The following is a 283-amino-acid chain: tRNA dimethylallyltransferase (283 aa).

The interval 5-8 is interaction with substrate tRNA; sequence DSML.

It belongs to the IPP transferase family. In terms of assembly, monomer. Mg(2+) is required as a cofactor.

It carries out the reaction adenosine(37) in tRNA + dimethylallyl diphosphate = N(6)-dimethylallyladenosine(37) in tRNA + diphosphate. Catalyzes the transfer of a dimethylallyl group onto the adenine at position 37 in tRNAs that read codons beginning with uridine, leading to the formation of N6-(dimethylallyl)adenosine (i(6)A). This is tRNA dimethylallyltransferase from Desulforamulus reducens (strain ATCC BAA-1160 / DSM 100696 / MI-1) (Desulfotomaculum reducens).